A 203-amino-acid chain; its full sequence is MATETAGAVVESSSAATVPSPAPEAGSKHKLERKWTFWFDNQSKPKQGAAWGTSLREVYTFDTVEEFWCLYDQVFKPSKLPGNADFHLFKTGIEPKWEDPECAKGGKWTVTSNRKANLDNMWLETMMALIGEQFDDAEDICGVVASVRQRQDKLSLWTKTAANEAAQMGIGRKWKEIIDVTDKIIYNFHDDSRTRSSKSRYSV.

The span at 1–25 (MATETAGAVVESSSAATVPSPAPEA) shows a compositional bias: low complexity. The disordered stretch occupies residues 1 to 27 (MATETAGAVVESSSAATVPSPAPEAGS). MRNA-binding positions include 47 to 52 (QGAAWG), Lys-79, and 97 to 98 (WE). An intrachain disulfide couples Cys-102 to Cys-141. Residue 148-153 (RQRQDK) participates in mRNA binding.

The protein belongs to the eukaryotic initiation factor 4E family. As to quaternary structure, EIF4F is a multi-subunit complex, the composition of which varies with external and internal environmental conditions. It is composed of at least EIF4A, EIF4E and EIF4G. EIF4E is also known to interact with other partners. In higher plants two isoforms of EIF4F have been identified, named isoform EIF4F and isoform EIF(iso)4F. Isoform EIF4F has subunits p220 and p26, whereas isoform EIF(iso)4F has subunits p82 and p28. (Microbial infection) Interacts with the potyvirus peanut stripe virus (PStV) helper component proteinase (HC-Pro) in the cytoplasm and with PStV viral genome-linked protein (VPg) in the nucleus; these interactions are possible in susceptible hosts but impaired in resistant plants. In terms of processing, according to the redox status, the Cys-102-Cys-141 disulfide bridge may have a role in regulating protein function by affecting its ability to bind capped mRNA. In terms of tissue distribution, expressed ubiquitously with highest levels in young leaves and roots, and lowest levels in flowers.

It localises to the cytoplasm. The protein resides in the nucleus. In terms of biological role, component of the protein complex eIF4F, which is involved in the recognition of the mRNA cap, ATP-dependent unwinding of 5'-terminal secondary structure and recruitment of mRNA to the ribosome. Recognizes and binds the 7-methylguanosine-containing mRNA cap during an early step in the initiation of protein synthesis and facilitates ribosome binding by inducing the unwinding of the mRNAs secondary structures. Key component of recessive resistance to potyviruses such as peanut stripe virus (PStV). Functionally, (Microbial infection) Susceptibility host factor required for viral infection by recruiting viral RNAs to the host ribosomal complex via an interaction with viral genome-linked protein (VPg). The chain is Eukaryotic translation initiation factor isoform 4E from Arachis hypogaea (Peanut).